The chain runs to 196 residues: Probable nicotinate-nucleotide adenylyltransferase (196 aa).

It belongs to the NadD family.

The catalysed reaction is nicotinate beta-D-ribonucleotide + ATP + H(+) = deamido-NAD(+) + diphosphate. The protein operates within cofactor biosynthesis; NAD(+) biosynthesis; deamido-NAD(+) from nicotinate D-ribonucleotide: step 1/1. Catalyzes the reversible adenylation of nicotinate mononucleotide (NaMN) to nicotinic acid adenine dinucleotide (NaAD). The chain is Probable nicotinate-nucleotide adenylyltransferase from Thermotoga sp. (strain RQ2).